Reading from the N-terminus, the 350-residue chain is Inner membrane protein YhiM (350 aa).

Residues 1–2 are Cytoplasmic-facing; that stretch reads MN. The helical transmembrane segment at 3-23 threads the bilayer; that stretch reads IYIGWLFKLIPLIMGLICIAL. Over 24-41 the chain is Periplasmic; it reads GGFVLESSGQSEYFVAGH. The chain crosses the membrane as a helical span at residues 42-62; sequence VLISLAAICLALFTTAFIIIS. The Cytoplasmic segment spans residues 63–74; it reads QLTRGVNTFYNT. The helical transmembrane segment at 75 to 95 threads the bilayer; sequence LFPIIGYAGSIITMIWGWALL. Residues 96–104 are Periplasmic-facing; it reads AGNDVMADE. The helical transmembrane segment at 105–125 threads the bilayer; the sequence is FVAGHVIFGVGMIAACVSTVA. Residues 126–157 are Cytoplasmic-facing; that stretch reads ASSGHFLLIPKNAAGSKSDGTPVQAYSSLIGN. The chain crosses the membrane as a helical span at residues 158–178; sequence CLIAVPVLLTLLGFIWSITLL. Residues 179–190 are Periplasmic-facing; sequence RSADITPHYVAG. The chain crosses the membrane as a helical span at residues 191-211; that stretch reads HVLLGLTAICACLIGLVATIV. Topologically, residues 212–225 are cytoplasmic; it reads HQTRNTFSTKEHWL. Residues 226–246 form a helical membrane-spanning segment; the sequence is WCYWVIFLGSITVLQGIYVLV. The Periplasmic portion of the chain corresponds to 247–257; the sequence is SSDASARLAPG. A helical membrane pass occupies residues 258–278; sequence IILICLGMICYSIFSKVWLLA. At 279-290 the chain is on the cytoplasmic side; that stretch reads LVWRRTCSLANR. Residues 291 to 311 form a helical membrane-spanning segment; sequence IPMIPVFTCLFCLFLASFLAE. The Periplasmic portion of the chain corresponds to 312 to 324; it reads MAQTDMGYFIPSR. Residues 325–345 traverse the membrane as a helical segment; that stretch reads VLVGLGAVCFTLFSIVSILEA. The Cytoplasmic portion of the chain corresponds to 346-350; the sequence is GSAKK.

The protein resides in the cell inner membrane. This chain is Inner membrane protein YhiM (yhiM), found in Escherichia coli (strain K12).